We begin with the raw amino-acid sequence, 392 residues long: Arogenate dehydratase/prephenate dehydratase 1, chloroplastic (392 aa).

A chloroplast-targeting transit peptide spans 1–48 (MALRCFPIWVCPQTTHHRSPLMGLAEFDADKRRRFCLWECSSSASQRA). Positions 107 to 282 (RISFQGIPGA…NVTRFLILAR (176 aa)) constitute a Prephenate dehydratase domain. Positions 296 to 387 (SIVFSLEEGP…SFIRILGCYP (92 aa)) constitute an ACT domain.

In terms of tissue distribution, expressed in roots, leaves, stems, flowers and siliques.

Its subcellular location is the plastid. It localises to the chloroplast stroma. It catalyses the reaction L-arogenate + H(+) = L-phenylalanine + CO2 + H2O. The enzyme catalyses prephenate + H(+) = 3-phenylpyruvate + CO2 + H2O. It functions in the pathway amino-acid biosynthesis; L-phenylalanine biosynthesis; L-phenylalanine from L-arogenate: step 1/1. Its pathway is amino-acid biosynthesis; L-phenylalanine biosynthesis; phenylpyruvate from prephenate: step 1/1. Its function is as follows. Converts the prephenate produced from the shikimate-chorismate pathway into phenylalanine. Dehydratase that uses arogenate and prephenate as substrates. Utilzes more efficiently arogenate than prephenate. This is Arogenate dehydratase/prephenate dehydratase 1, chloroplastic from Arabidopsis thaliana (Mouse-ear cress).